A 2140-amino-acid chain; its full sequence is Dedicator of cytokinesis protein 7 (2140 aa).

A phosphoserine mark is found at Ser-30, Ser-180, and Ser-182. The segment at 138-183 is disordered; the sequence is FNPNTLDKQKERQKGLPKQVFESDEAPDGNSYQDDQDDLKRRSMSI. Residues 365-395 adopt a coiled-coil conformation; that stretch reads FKEADATKNKEKLEKLKSQADQFCQRLGKYR. Lys-381 is modified (N6-methyllysine). The residue at position 450 (Thr-450) is a Phosphothreonine. The residue at position 452 (Ser-452) is a Phosphoserine. The region spanning 561 to 727 is the C2 DOCK-type domain; that stretch reads RNLLYIYPQS…GVFNVEVVAV (167 aa). Ser-862, Ser-864, Ser-882, Ser-888, Ser-896, Ser-900, and Ser-905 each carry phosphoserine. Residues 888-901 show a composition bias toward low complexity; the sequence is SLNLNRSRSLSNSN. The disordered stretch occupies residues 888-971; the sequence is SLNLNRSRSL…MSSHTETSSF (84 aa). Phosphothreonine occurs at positions 907 and 909. Phosphoserine is present on residues Ser-910, Ser-929, Ser-964, Ser-1383, Lys-1390, Ala-1394, Glu-1398, Tyr-1421, Ser-1425, Arg-1429, Ser-1430, Ser-1432, Ser-1434, and Ser-1438. Residues 943-971 show a composition bias toward polar residues; sequence SNPSPSAESTQAMDRSCNRMSSHTETSSF. Positions 1678–2114 constitute a DOCKER domain; the sequence is KGYQTSPDLR…LQPLINRKIP (437 aa). Position 1962 is an N6-acetyllysine (Lys-1962). Residues 2086 to 2112 adopt a coiled-coil conformation; the sequence is DQKEYQRELERNYHRLKEALQPLINRK. Position 2129 is a phosphoserine (Ser-2129).

This sequence belongs to the DOCK family. Component of the DOCK7-induced septin displacement/DISP complex, at least composed of DOCK7, LRCH3 and MYO6. Interacts with TSC1. Interacts with nucleotide-free RAC1 and RAC3. Interacts with TACC3 and CRY1. Interacts with NOD2. In terms of tissue distribution, widely expressed.

Its subcellular location is the cell projection. The protein localises to the axon. Functions as a guanine nucleotide exchange factor (GEF), which activates Rac1 and Rac3 Rho small GTPases by exchanging bound GDP for free GTP. Does not have a GEF activity for CDC42. Required for STMN1 'Ser-15' phosphorylation during axon formation and consequently for neuronal polarization. As part of the DISP complex, may regulate the association of septins with actin and thereby regulate the actin cytoskeleton. Has a role in pigmentation. Involved in the regulation of cortical neurogenesis through the control of radial glial cells (RGCs) proliferation versus differentiation; negatively regulates the basal-to-apical interkinetic nuclear migration of RGCs by antagonizing the microtubule growth-promoting function of TACC3. This is Dedicator of cytokinesis protein 7 (DOCK7) from Homo sapiens (Human).